Consider the following 696-residue polypeptide: Probable glutamine--fructose-6-phosphate aminotransferase [isomerizing] (696 aa).

Catalysis depends on cysteine 2, which acts as the For GATase activity. A Glutamine amidotransferase type-2 domain is found at 2-303 (CGIFGYINYL…DDDIAHVRDG (302 aa)). SIS domains are found at residues 375 to 514 (YYDI…DSVS) and 547 to 686 (AIEQ…VDQP).

It catalyses the reaction D-fructose 6-phosphate + L-glutamine = D-glucosamine 6-phosphate + L-glutamate. It participates in nucleotide-sugar biosynthesis; UDP-N-acetyl-alpha-D-glucosamine biosynthesis; alpha-D-glucosamine 6-phosphate from D-fructose 6-phosphate: step 1/1. Its function is as follows. Involved in amino sugar synthesis (formation of chitin, supplies the amino sugars of asparagine-linked oligosaccharides of glycoproteins). The sequence is that of Probable glutamine--fructose-6-phosphate aminotransferase [isomerizing] from Schizosaccharomyces pombe (strain 972 / ATCC 24843) (Fission yeast).